We begin with the raw amino-acid sequence, 718 residues long: Manganese-exporting P-type ATPase (718 aa).

Positions 11–78 (GRMRVKVDWV…AIKGAAHVAA (68 aa)) constitute an HMA domain. 6 helical membrane-spanning segments follow: residues 87–105 (HSAEIRNTDVLRMVIGGVA), 128–146 (TVATGVTIFTGYPFLRGAL), 154–168 (AGTDALVSAATVASL), 177–191 (LTVLWLLNIGEYLQD), 327–351 (VGENFSRRFVPTSFIVSAIALLITG), and 357–375 (MTMLLIACPCAVGLSTPTA). The 4-aspartylphosphate intermediate role is filled by Asp-408. Asp-408, Thr-410, and Asp-610 together coordinate Mg(2+). Helical transmembrane passes span 661–680 (AVDVIRQNYGMSIAVNAAGL) and 690–709 (PVLAAILHNASSVAVVANSS).

It belongs to the cation transport ATPase (P-type) (TC 3.A.3) family. Type IB subfamily.

The protein resides in the cell membrane. The enzyme catalyses Mn(2+)(in) + ATP + H2O = Mn(2+)(out) + ADP + phosphate + H(+). In terms of biological role, high affinity, slow turnover Mn(2+) transporting ATPase. This is Manganese-exporting P-type ATPase (ctpC) from Mycobacterium bovis (strain ATCC BAA-935 / AF2122/97).